We begin with the raw amino-acid sequence, 193 residues long: Probable DNA-directed RNA polymerase subunit delta (193 aa).

One can recognise an HTH HARE-type domain in the interval 14-83 (LSMIEVARAI…GENKWGLRSW (70 aa)). Composition is skewed to acidic residues over residues 117–134 (GDDDAIDYGHDDPEDEDN) and 142–193 (EYDD…VVDE). The interval 117–193 (GDDDAIDYGH…EYSDEEVVDE (77 aa)) is disordered.

The protein belongs to the RpoE family. RNAP is composed of a core of 2 alpha, a beta and a beta' subunits. The core is associated with a delta subunit and one of several sigma factors.

Participates in both the initiation and recycling phases of transcription. In the presence of the delta subunit, RNAP displays an increased specificity of transcription, a decreased affinity for nucleic acids, and an increased efficiency of RNA synthesis because of enhanced recycling. The polypeptide is Probable DNA-directed RNA polymerase subunit delta (Streptococcus suis (strain 05ZYH33)).